The sequence spans 224 residues: Ribonuclease HII (224 aa).

An RNase H type-2 domain is found at 17 to 201 (GTVIGVDEAG…VLSNLSVKKV (185 aa)). Positions 23, 24, and 111 each coordinate a divalent metal cation.

It belongs to the RNase HII family. Requires Mn(2+) as cofactor. The cofactor is Mg(2+).

It is found in the cytoplasm. It carries out the reaction Endonucleolytic cleavage to 5'-phosphomonoester.. In terms of biological role, endonuclease that specifically degrades the RNA of RNA-DNA hybrids. The protein is Ribonuclease HII of Pseudothermotoga lettingae (strain ATCC BAA-301 / DSM 14385 / NBRC 107922 / TMO) (Thermotoga lettingae).